Here is a 594-residue protein sequence, read N- to C-terminus: Glutamate decarboxylase 1 (594 aa).

Residues 1–13 show a composition bias toward low complexity; sequence MASSTPSSSATSS. Residues 1 to 25 form a disordered region; it reads MASSTPSSSATSSNAGPDPNTTNLR. Ser78 is modified (phosphoserine). Residue 190–192 participates in 4-aminobutanoate binding; the sequence is QLS. At Lys405 the chain carries N6-(pyridoxal phosphate)lysine. 4-aminobutanoate is bound at residue Arg567.

The protein belongs to the group II decarboxylase family. In terms of assembly, homodimer. Pyridoxal 5'-phosphate is required as a cofactor.

The enzyme catalyses L-glutamate + H(+) = 4-aminobutanoate + CO2. In terms of biological role, catalyzes the synthesis of the inhibitory neurotransmitter gamma-aminobutyric acid (GABA) with pyridoxal 5'-phosphate as cofactor. This is Glutamate decarboxylase 1 (GAD1) from Sus scrofa (Pig).